Here is a 122-residue protein sequence, read N- to C-terminus: Small ribosomal subunit protein uS13 (122 aa).

Residues 97 to 122 form a disordered region; the sequence is PCRGQRTKTNARTRKGPARTVAGKKK.

The protein belongs to the universal ribosomal protein uS13 family. Part of the 30S ribosomal subunit. Forms a loose heterodimer with protein S19. Forms two bridges to the 50S subunit in the 70S ribosome.

Its function is as follows. Located at the top of the head of the 30S subunit, it contacts several helices of the 16S rRNA. In the 70S ribosome it contacts the 23S rRNA (bridge B1a) and protein L5 of the 50S subunit (bridge B1b), connecting the 2 subunits; these bridges are implicated in subunit movement. Contacts the tRNAs in the A and P-sites. This chain is Small ribosomal subunit protein uS13, found in Geobacter sp. (strain M21).